Consider the following 399-residue polypeptide: Octopine dehydrogenase (399 aa).

Residues Gly-10–Gly-13 and Phe-35–Glu-38 each bind NADH. Positions 118 and 143 each coordinate pyruvate. Gln-118 contacts substrate. Cys-148 serves as a coordination point for NAD(+). Residue Met-206 participates in L-arginine binding. His-212 lines the pyruvate pocket. Residue His-212 is part of the active site. NAD(+) is bound at residue Arg-324.

Belongs to the lysopine/nopaline/octopine/opine/vitopine dehydrogenases family.

The catalysed reaction is D-octopine + NAD(+) + H2O = L-arginine + pyruvate + NADH + H(+). Its activity is regulated as follows. Agmatine acts as a competitive inhibitor of the condensation reaction where the L-arginine and agmatine substrates compete for the same site. Functionally, catalyzes the reverse reaction of octopine dehydrogenation. Acts on L-arginine in preference to other substrates such as canavanine, cysteine, L-alanine, ornithine or norvaline, owing to the presence of the positively charged guanidium group. The sequence is that of Octopine dehydrogenase from Pecten maximus (King scallop).